We begin with the raw amino-acid sequence, 506 residues long: Arylsulfatase A (506 aa).

The signal sequence occupies residues 1 to 17 (MALGTLFLALAAGLSTA). Positions 28, 29, and 68 each coordinate Ca(2+). Cys-68 functions as the Nucleophile in the catalytic mechanism. A 3-oxoalanine (Cys) modification is found at Cys-68. Position 122 (Lys-122) interacts with substrate. His-124 is an active-site residue. Ser-149 lines the substrate pocket. Disulfide bonds link Cys-155–Cys-171 and Cys-160–Cys-167. Asn-157 carries an N-linked (GlcNAc...) asparagine glycan. Asn-183 carries N-linked (GlcNAc...) asparagine glycosylation. His-228 provides a ligand contact to substrate. 2 residues coordinate Ca(2+): Asp-280 and Asn-281. 4 disulfides stabilise this stretch: Cys-299–Cys-413, Cys-487–Cys-499, Cys-488–Cys-501, and Cys-492–Cys-498. Lys-301 contributes to the substrate binding site. N-linked (GlcNAc...) asparagine glycosylation is present at Asn-349.

The protein belongs to the sulfatase family. As to quaternary structure, homodimer at neutral pH and homooctamer at acidic pH. Exists both as a single chain of 58 kDa (component A) or as a chain of 50 kDa (component B) linked by disulfide bond(s) to a 7 kDa chain (component C). Interacts with SUMF1. Ca(2+) serves as cofactor. Post-translationally, the conversion to 3-oxoalanine (also known as C-formylglycine, FGly), of a serine or cysteine residue in prokaryotes and of a cysteine residue in eukaryotes, is critical for catalytic activity. This post-translational modification is severely defective in multiple sulfatase deficiency (MSD).

The protein localises to the endoplasmic reticulum. The protein resides in the lysosome. The enzyme catalyses an N-acyl-1-beta-D-(3-O-sulfo)-galactosyl-sphing-4-enine + H2O = a beta-D-galactosyl-(1&lt;-&gt;1')-N-acylsphing-4-enine + sulfate + H(+). Hydrolyzes cerebroside sulfate. The polypeptide is Arylsulfatase A (Arsa) (Mus musculus (Mouse)).